A 396-amino-acid chain; its full sequence is Elongation factor Tu (396 aa).

Residues 10 to 206 form the tr-type G domain; sequence KPHVNVGTIG…ALDTYIPTPE (197 aa). Residues 19-26 form a G1 region; the sequence is GHVDHGKT. 19-26 is a binding site for GTP; that stretch reads GHVDHGKT. Thr-26 serves as a coordination point for Mg(2+). The G2 stretch occupies residues 60–64; the sequence is GITIN. Residues 81–84 form a G3 region; the sequence is DCPG. Residues 81–85 and 136–139 contribute to the GTP site; these read DCPGH and NKAD. The G4 stretch occupies residues 136 to 139; sequence NKAD. The tract at residues 174 to 176 is G5; the sequence is SAK.

This sequence belongs to the TRAFAC class translation factor GTPase superfamily. Classic translation factor GTPase family. EF-Tu/EF-1A subfamily. Monomer.

It is found in the cytoplasm. It carries out the reaction GTP + H2O = GDP + phosphate + H(+). Functionally, GTP hydrolase that promotes the GTP-dependent binding of aminoacyl-tRNA to the A-site of ribosomes during protein biosynthesis. This Bordetella bronchiseptica (strain ATCC BAA-588 / NCTC 13252 / RB50) (Alcaligenes bronchisepticus) protein is Elongation factor Tu.